The following is a 528-amino-acid chain: Protein arginine N-methyltransferase 3 (528 aa).

A disordered region spans residues 1 to 43 (MCSLAAGNGRGAELGPEPLELSDSGDDAGWEDEDADTEPAHGR). C2 carries the N-acetylcysteine modification. 2 positions are modified to phosphoserine: S22 and S24. Residues 23–37 (DSGDDAGWEDEDADT) show a composition bias toward acidic residues. The C2H2-type zinc finger occupies 46–69 (TPCLFCDRLFASAEETFSHCKLEH). S169 bears the Phosphoserine mark. Residues 184-528 (MKQFAQDFVM…NSSTQTYSLQ (345 aa)) form a mediates interaction with ALDH1A1 region. The SAM-dependent MTase PRMT-type domain maps to 214–528 (DGVYFSSYGH…NSSTQTYSLQ (315 aa)). The S-adenosyl-L-homocysteine site is built by R236, G260, D282, S284, I310, and E311. Active-site residues include E326 and E335.

It belongs to the class I-like SAM-binding methyltransferase superfamily. Protein arginine N-methyltransferase family. Monomer and homodimer. Interacts with EPB41L3 (via FERM domain); the interaction is direct and inhibits the protein-arginine N-methyltransferase activity of PRMT3. Interacts with the 40S ribosomal protein RPS2. Interacts with ALDH1A1; the interaction is direct, inhibits ALDH1A1 aldehyde dehydrogenase activity and is independent of the methyltransferase activity of PRMT3.

The protein localises to the cytoplasm. It localises to the cytosol. Its subcellular location is the nucleus. The enzyme catalyses L-arginyl-[protein] + S-adenosyl-L-methionine = N(omega)-methyl-L-arginyl-[protein] + S-adenosyl-L-homocysteine + H(+). It carries out the reaction L-arginyl-[protein] + 2 S-adenosyl-L-methionine = N(omega),N(omega)-dimethyl-L-arginyl-[protein] + 2 S-adenosyl-L-homocysteine + 2 H(+). Inhibited by N-ethylmaleimide and high concentrations of zinc chloride. In terms of biological role, protein-arginine N-methyltransferase that catalyzes both the monomethylation and asymmetric dimethylation of the guanidino nitrogens of arginine residues in target proteins, and therefore falls into the group of type I methyltransferases. Catalyzes the asymmetric arginine dimethylation at multiple sites in the Arg/Gly-rich region of small ribosomal subunit protein uS5/RPS2. Also appears to methylate other ribosomal proteins. May regulate retinoic acid synthesis and signaling by inhibiting ALDH1A1 retinal dehydrogenase activity. Contributes to methylation of histone H4 'Arg-3', a specific tag for epigenetic transcriptional activation. Promotes osteogenesis. The polypeptide is Protein arginine N-methyltransferase 3 (Mus musculus (Mouse)).